A 64-amino-acid polypeptide reads, in one-letter code: Photosystem II reaction center protein J (64 aa).

Residues 35 to 55 traverse the membrane as a helical segment; it reads LWLVATAGGIAVIFVLGIFFY.

This sequence belongs to the PsbJ family. PSII is composed of 1 copy each of membrane proteins PsbA, PsbB, PsbC, PsbD, PsbE, PsbF, PsbH, PsbI, PsbJ, PsbK, PsbL, PsbM, PsbT, PsbX, PsbY, Psb30/Ycf12, peripheral proteins PsbO, CyanoQ (PsbQ), PsbU, PsbV and a large number of cofactors. It forms dimeric complexes.

It is found in the cellular thylakoid membrane. In terms of biological role, one of the components of the core complex of photosystem II (PSII). PSII is a light-driven water:plastoquinone oxidoreductase that uses light energy to abstract electrons from H(2)O, generating O(2) and a proton gradient subsequently used for ATP formation. It consists of a core antenna complex that captures photons, and an electron transfer chain that converts photonic excitation into a charge separation. The chain is Photosystem II reaction center protein J from Prochlorococcus marinus (strain MIT 9515).